The chain runs to 234 residues: Adenosine 5'-phosphosulfate reductase (234 aa).

[4Fe-4S] cluster-binding residues include C120, C121, C203, and C206. C229 acts as the Nucleophile; cysteine thiosulfonate intermediate in catalysis.

Belongs to the PAPS reductase family. CysH subfamily. [4Fe-4S] cluster serves as cofactor.

Its subcellular location is the cytoplasm. It catalyses the reaction [thioredoxin]-disulfide + sulfite + AMP + 2 H(+) = adenosine 5'-phosphosulfate + [thioredoxin]-dithiol. It participates in sulfur metabolism; hydrogen sulfide biosynthesis; sulfite from sulfate. In terms of biological role, catalyzes the formation of sulfite from adenosine 5'-phosphosulfate (APS) using thioredoxin as an electron donor. This is Adenosine 5'-phosphosulfate reductase from Bacillus cereus (strain 03BB102).